The sequence spans 367 residues: 15-cis-zeta-carotene isomerase, chloroplastic (367 aa).

The N-terminal 58 residues, 1-58 (MAVYHLLLSSPPSLLLLPPSPRRPNLTLIRRIPAHPRLGNSTSLLSSSSPVIRKILVR), are a transit peptide targeting the chloroplast. Transmembrane regions (helical) follow at residues 95–115 (SWVYFGVVLGVVLFILNVVWI), 137–157 (EVAMLMLILIFAIVHSGLASL), 172–192 (VLFAGISLPLAMSTIVYFINH), 211–231 (AIWVANFVSFFFLYPSTFNLL), 269–289 (LWIGNTVAASASLGLIAHHLF), and 339–359 (LPYLAITALTVGAYFAHPLMQ).

Expressed in leaves and at lower levels in roots.

It localises to the plastid. The protein resides in the chloroplast membrane. It carries out the reaction 9,9',15-tri-cis-zeta-carotene = 9,9'-di-cis-zeta-carotene. Isomerase involved in the biosynthesis of carotenoids. Catalyzes the cis- to trans-conversion of the 15-cis-bond in 9,15,9'-tri-cis-zeta-carotene. The protein is 15-cis-zeta-carotene isomerase, chloroplastic (Z-ISO) of Arabidopsis thaliana (Mouse-ear cress).